The chain runs to 206 residues: Sclerostin domain-containing protein 1 (206 aa).

The signal sequence occupies residues 1–23 (MLPPAIHFYLLPLACILMKSCLA). Residue asparagine 47 is glycosylated (N-linked (GlcNAc...) asparagine). 4 cysteine pairs are disulfide-bonded: cysteine 75/cysteine 133, cysteine 89/cysteine 147, cysteine 100/cysteine 163, and cysteine 104/cysteine 165. Positions 75–170 (CRELRSTKYI…TACKCKRYTR (96 aa)) constitute a CTCK domain. Asparagine 173 carries an N-linked (GlcNAc...) asparagine glycan. The interval 174–206 (ESSHNFESMSPAKPVQHHRERKRASKSSKHSMS) is disordered. The segment covering 188–206 (VQHHRERKRASKSSKHSMS) has biased composition (basic residues).

This sequence belongs to the sclerostin family. In terms of assembly, interacts with BMP2, BMP4, BMP6 and BMP7 with high affinity. As to expression, highly expressed in kidney and weakly in lung.

The protein localises to the secreted. May be involved in the onset of endometrial receptivity for implantation/sensitization for the decidual cell reaction Enhances Wnt signaling and inhibits TGF-beta signaling. Directly antagonizes activity of BMP2, BMP4, BMP6 and BMP7 in a dose-dependent manner. This is Sclerostin domain-containing protein 1 (SOSTDC1) from Homo sapiens (Human).